The primary structure comprises 5588 residues: Histone-lysine N-methyltransferase 2D (5588 aa).

The disordered stretch occupies residues 1–61 (MDSQKPPAED…QKPPHDCSRG (61 aa)). The segment at 104–149 (GPCEAVLPKEDASQIGFPEGLTPAHLGEPGGHCWAHHWCAAWSAGV) adopts a C2HC pre-PHD-type 1; degenerate zinc-finger fold. 2 PHD-type zinc fingers span residues 170 to 218 (QRCS…PEHS) and 270 to 323 (CPEC…CRLC). The PHD-type 2; degenerate zinc finger occupies 226 to 276 (EARCAVCEGPGQLCDLLFCTSCGHHYHGACLDTALTARKRASWQCPECKVC). An RING-type 1; atypical zinc finger spans residues 229–274 (CAVCEGPGQLCDLLFCTSCGHHYHGACLDTALTARKRASWQCPECK). The RING-type 2; degenerate zinc-finger motif lies at 276 to 321 (CQSCRKPGNDSKMLVCETCDKGYHTFCLKPPMEDLPAHSWKCKTCR). 2 disordered regions span residues 438 to 908 (MPLL…SPII) and 922 to 1315 (LEYP…DDDT). The segment at 439–642 (PLLPPPEESP…VSRLSPPPEE (204 aa)) is 15 X 5 AA repeats of S/P-P-P-E/P-E/A. Residues 440–463 (LLPPPEESPLSPPPEESPTSPPPE) are compositionally biased toward pro residues. Repeat copies occupy residues 442–446 (PPPEE), 460–464 (PPPEA), 469–473 (PPTEE), and 477–481 (SPPPE). The segment covering 464–475 (ASRLSPPTEESP) has biased composition (low complexity). Composition is skewed to pro residues over residues 490–512 (GCPPSPALDTPLSPPPEASPLSP) and 519–560 (LSPP…PPPE). Tandem repeats lie at residues 520 to 524 (SPPPE), 529 to 533 (SPPPE), 538 to 542 (SPPPE), and 547 to 551 (SPPPE). Over residues 561 to 572 (ASRLFPPFEESP) the composition is skewed to low complexity. Residues 573-614 (LSPPPEDSPLSPPPEASRLSPPPEDSPMSPPPEDSPMSPPPE) are compositionally biased toward pro residues. A run of 4 repeats spans residues 574–578 (SPPPE), 583–587 (SPPPE), 592–596 (SPPPE), and 610–614 (SPPPE). Low complexity predominate over residues 619 to 636 (LPLPVLSHLSPLPEVSRL). Residues 637-641 (SPPPE) form repeat 15. Over residues 637–677 (SPPPEESPLSPPPEDSPASPPPEASRLSPPPEDSPASPPPE) the composition is skewed to pro residues. Over residues 696-712 (DSLVSLPMEESPLSPLP) the composition is skewed to low complexity. Ser727 is modified (phosphoserine). Composition is skewed to low complexity over residues 735-755 (LCPQPEELPLSPQSEEPCLSP), 836-851 (PSQSSAPKELSLFSPS), and 876-893 (LPEELPLSLSGEPVLSPQ). Composition is skewed to pro residues over residues 894-908 (LMPPDPLPPPLSPII), 959-973 (EPVPPMILPPSPGSP), and 985-1012 (LPPPCSPLLPHSLPPPTPPPSHCSPPAL). The span at 1013 to 1023 (PLSVPSPLSPV) shows a compositional bias: low complexity. Residues 1033 to 1045 (AELHEMETDKGPE) are compositionally biased toward basic and acidic residues. PHD-type zinc fingers lie at residues 1071–1124 (PSPA…PMEV), 1121–1171 (PMEV…SQGD), and 1198–1253 (LGVS…SPAR). Ser1107 carries the phosphoserine modification. Residues 1163–1172 (EISNLSQGDA) are compositionally biased toward polar residues. The RING-type 3; atypical zinc-finger motif lies at 1201-1251 (STDVSPARDEGSLRLCTDSLPETDDSLLCDTGTATSGGKAEGDKGRRRSSP). Ser1205 is subject to Phosphoserine. Thr1223 is subject to Phosphothreonine. Ser1226 carries the post-translational modification Phosphoserine. Positions 1245 to 1258 (GRRRSSPARSRIKQ) are enriched in basic residues. A Phosphoserine modification is found at Ser1562. Disordered stretches follow at residues 1566–1721 (KRRQ…SKLE), 1751–1846 (GRPG…MESK), 1886–1962 (GLAL…SLQR), and 2095–2641 (SADG…QRQR). The segment covering 1593–1608 (PDDKKDGDLDTDDLLK) has biased composition (basic and acidic residues). Residue Ser1627 is modified to Phosphoserine. Basic and acidic residues predominate over residues 1631 to 1641 (ELGKEETEESK). Basic residues-rich tracts occupy residues 1658–1668 (RQRKSHTRVKR) and 1709–1718 (KQQRRARKKS). Residues 1762 to 1782 (PRADGGSDRKELMTAMHKGDD) are compositionally biased toward basic and acidic residues. Position 1791 is a phosphoserine (Ser1791). Thr1822 is modified (phosphothreonine). The span at 1831–1846 (DLDRIPTEELPKMESK) shows a compositional bias: basic and acidic residues. 2 stretches are compositionally biased toward low complexity: residues 1886 to 1896 (GLALGSLPSSS) and 1936 to 1947 (TTPSTPTTPTTE). The segment covering 2151–2166 (PTYPPYPSPTGAPAQP) has biased composition (pro residues). Low complexity predominate over residues 2170–2181 (GTTTRPGTGQPG). Ser2196 carries the post-translational modification Phosphoserine. Thr2197 is modified (phosphothreonine). An N6-acetyllysine modification is found at Lys2203. A phosphoserine mark is found at Ser2217 and Ser2231. Over residues 2237-2249 (ESRKSLEVKKEEL) the composition is skewed to basic and acidic residues. Phosphoserine is present on residues Ser2266, Ser2268, and Ser2299. Composition is skewed to pro residues over residues 2308–2322 (EPPPAQALAPSPPSH) and 2331–2359 (YPDPYAQPPLTPRPQPPPPESCCAPPPRS). Over residues 2366–2388 (SRVPASPQSQSSSQSPLTPRPLS) the composition is skewed to low complexity. The segment covering 2470 to 2486 (GQPTNFARSPGTGTFVG) has biased composition (polar residues). The residue at position 2492 (Arg2492) is an Asymmetric dimethylarginine. Over residues 2504–2514 (LKPPVPQPGLP) the composition is skewed to pro residues. Residues 2546–2557 (PSGSPLGPNSGP) show a composition bias toward low complexity. Phosphoserine is present on Ser2597. The span at 2610-2622 (SSSSLATPELSSA) shows a compositional bias: low complexity. A coiled-coil region spans residues 2627–2665 (ISSLSQTELEKQRQRQRLRELLIRQQIQRNTLRQEKETA). The short motif at 2644–2648 (LRELL) is the LXXLL motif 1 element. A disordered region spans residues 2655–2806 (RNTLRQEKET…QLWQQQQQQQ (152 aa)). The span at 2665–2680 (AAAAAGAVGPPGNWGA) shows a compositional bias: low complexity. Polar residues-rich tracts occupy residues 2691-2704 (SRGQTPFTGSQDRS) and 2739-2748 (PSSMDMNSRQ). Residues 2768–2813 (LQQQQQQQQQQQQQQQQQQQQQQQQQQQQQLWQQQQQQQQQQQQQA) are a coiled coil. Positions 2769–2806 (QQQQQQQQQQQQQQQQQQQQQQQQQQQQQLWQQQQQQQ) are enriched in low complexity. Position 2829 is an asymmetric dimethylarginine (Arg2829). The LXXLL motif 2 motif lies at 3030–3034 (LDDLL). The disordered stretch occupies residues 3069–3104 (NEKAEREALLRGVEPVSLGPEERPPPAPDNSEPRLT). Lys3071 is subject to N6-acetyllysine. Ser3122 and Ser3193 each carry phosphoserine. 2 disordered regions span residues 3129–3193 (NTPK…LNPS) and 3271–3326 (QQQQ…QSMV). Residues 3271 to 3284 (QQQQQQQQQQQQQQ) are compositionally biased toward low complexity. N6-acetyllysine is present on Lys3430. 4 disordered regions span residues 3460–3496 (SGGSGSDLQNHVAPGSGQERNAGDPAQPRPNPPTFAQ), 3593–3617 (RNKQQQQQQQQQQQQQQQHSAVLAV), 3633–3661 (LLPAHGLQPPQAPPGGQAGGLRLPPGGMV), and 3678–3704 (QQQQQHSGVAGSLTGPPGSFFPGNLAL). Residues 3559–3613 (EKLKLVTEQQSKIQKQLDQVRKQQKEHTNLMAEYRNKQQQQQQQQQQQQQQQHSA) adopt a coiled-coil conformation. Residues 3596-3610 (QQQQQQQQQQQQQQQ) show a composition bias toward low complexity. A coiled-coil region spans residues 3712-3747 (RLLQERQLQLQQQRMQLAQKLQQQQQQQQQQQQQQH). Arg3725 carries the asymmetric dimethylarginine modification. 2 disordered regions span residues 3760 to 3780 (PGVQNQALGPKPQGLLPPSNH) and 3808 to 3827 (LQQQQQQQQHSGALGPQGPH). Coiled-coil stretches lie at residues 3854 to 3883 (RLLTAQQQQQQQQQQQQQQQQQQQQQQQQQ) and 3912 to 4052 (SLQQ…QVTL). The tract at residues 4053–4249 (GPGLPVKPLQ…QGPPGAGVMP (197 aa)) is disordered. Composition is skewed to low complexity over residues 4128–4159 (SQLLLVQSQAQSQATSVQLQPPLRLPGQPQPQ), 4172–4183 (GQQLGSGSSSES), and 4226–4240 (GSQPPKSGPAPQSGQ). Arg4255 carries the asymmetric dimethylarginine modification. At Ser4272 the chain carries Phosphoserine. The LXXLL motif 3 motif lies at 4279 to 4283 (LQALL). The segment at 4290–4452 (QSQAVRQTPP…SSLVPGHLDQ (163 aa)) is disordered. Positions 4294-4305 (VRQTPPFQEPGT) are enriched in polar residues. The segment covering 4307 to 4322 (PSPLQGLLGCQPQPGG) has biased composition (low complexity). An LXXLL motif 4 motif is present at residues 4310-4314 (LQGLL). The span at 4379-4391 (QLPSPSAQLTPTH) shows a compositional bias: polar residues. At Ser4410 the chain carries Phosphoserine. The segment covering 4432–4445 (DNLTEAQKPEQSSL) has biased composition (polar residues). Positions 4514-4518 (LQKLL) match the LXXLL motif 5 motif. Residue Lys4516 is modified to N6-acetyllysine. Disordered stretches follow at residues 4553–4596 (LQGT…EDGV), 4664–4716 (KNNL…EGAL), and 4729–4778 (AALP…QLGS). Over residues 4670–4684 (PPTPPSSLPPTPPPS) the composition is skewed to pro residues. At Ser4789 the chain carries Phosphoserine. Residue Lys4807 forms a Glycyl lysine isopeptide (Lys-Gly) (interchain with G-Cter in SUMO2) linkage. Position 4827 is an N6-acetyllysine (Lys4827). The RING-type 4; degenerate zinc-finger motif lies at 4829–4874 (KGSEVSVMLTVSAAAAKNLNGVMVAVAELLSMKIPNSYEVLFPDGP). The segment at 4877-4908 (AGLEPKKGEAEGPGGKEKGLSGKGPDTGPDWL) is disordered. Residues 4879 to 4896 (LEPKKGEAEGPGGKEKGL) show a composition bias toward basic and acidic residues. Lys4931 participates in a covalent cross-link: Glycyl lysine isopeptide (Lys-Gly) (interchain with G-Cter in SUMO2). The segment at 4956–5031 (QLSAPPPEEP…SEDSRPPRLK (76 aa)) is disordered. A compositionally biased stretch (pro residues) spans 4959–4982 (APPPEEPSPPPSPLAPSPASPPAE). Basic and acidic residues predominate over residues 5017–5027 (RPPEESEDSRP). The LXXLL motif 6 signature appears at 5041–5045 (LRLLL). Residues 5080 to 5120 (NRRCCFCHEEGDGATDGPARLLNLDLDLWVHLNCALWSTEV) form a C2HC pre-PHD-type 2 zinc finger. The PHD-type 7 zinc-finger motif lies at 5141-5188 (TKCSLCQRTGATSSCNRMRCPNVYHFACAIRAKCMFFKDKTMLCPVHK). The region spanning 5226–5286 (LHMFRVGGLV…CCYRCSISEN (61 aa)) is the FYR N-terminal domain. In terms of domain architecture, FYR C-terminal spans 5287-5372 (NGRPEFVIKV…ESCQNYLFRY (86 aa)). Positions 5388–5393 (GCARSE) match the WDR5 interaction motif (WIN) motif. An SET domain is found at 5448–5564 (NNVYLARSRI…KGEELTYDYQ (117 aa)). Residues Tyr5502 and 5525–5526 (NH) contribute to the S-adenosyl-L-methionine site. Zn(2+) is bound by residues Cys5528, Cys5576, Cys5578, and Cys5583. Residues 5572-5588 (HKIPCHCGAWNCRKWMN) enclose the Post-SET domain.

The protein belongs to the class V-like SAM-binding methyltransferase superfamily. Histone-lysine methyltransferase family. TRX/MLL subfamily. In terms of assembly, component of the MLL2 complex (also named ASCOM complex), at least composed of catalytic subunit KMT2D/MLL2, ASH2L, RBBP5, WDR5, NCOA6, DPY30, KDM6A, PAXIP1/PTIP, PAGR1 and alpha- and beta-tubulin. Forms a core complex with the evolutionary conserved subcomplex WRAD composed of WDR5, RBBP5, ASH2L/ASH2 and DPY30 subunits; WRAD differentially stimulates the methyltransferase activity. Interacts with ESR1; interaction is direct. Interacts (via WIN motif) with WDR5.

The protein resides in the nucleus. The catalysed reaction is L-lysyl(4)-[histone H3] + S-adenosyl-L-methionine = N(6)-methyl-L-lysyl(4)-[histone H3] + S-adenosyl-L-homocysteine + H(+). Its function is as follows. Histone methyltransferase that catalyzes methyl group transfer from S-adenosyl-L-methionine to the epsilon-amino group of 'Lys-4' of histone H3 (H3K4). Part of chromatin remodeling machinery predominantly forms H3K4me1 methylation marks at active chromatin sites where transcription and DNA repair take place. Acts as a coactivator for estrogen receptor by being recruited by ESR1, thereby activating transcription. The protein is Histone-lysine N-methyltransferase 2D (Kmt2d) of Mus musculus (Mouse).